Here is a 793-residue protein sequence, read N- to C-terminus: Wall-associated receptor kinase-like 18 (793 aa).

An N-terminal signal peptide occupies residues 1–28; the sequence is MSNESTNCSFFLNLFMLLLLLIFYSADA. Residues 29 to 378 are Extracellular-facing; that stretch reads CQRECGGISI…YRCVRDKTKA (350 aa). 6 N-linked (GlcNAc...) asparagine glycosylation sites follow: N60, N130, N170, N238, N285, and N304. The interval 312–371 is atypical EGF-like; that stretch reads CTCGRITISETSYANCGCTYGYTGNPYVLNGCKDIDECKVKFEYCGKTETCVNFEGGYRC. Intrachain disulfides connect C314/C327, C349/C362, and C356/C371. A helical transmembrane segment spans residues 379–399; that stretch reads IMIGAGTGFGVLVLVGGLWWL. Over 400–793 the chain is Cytoplasmic; that stretch reads RKFLIKRRIT…VEPLFPRLTW (394 aa). The 276-residue stretch at 453–728 folds into the Protein kinase domain; sequence FSENRVLGHG…REVFTELERI (276 aa). Residues 459–467 and K481 contribute to the ATP site; that span reads LGHGGQGTV. Position 526 is a phosphotyrosine (Y526). Catalysis depends on D579, which acts as the Proton acceptor. T613 and T618 each carry phosphothreonine. Residue Y626 is modified to Phosphotyrosine. The tract at residues 733-757 is disordered; the sequence is EDSQVHNRIDEEEEEEEEEEEVVTT. Over residues 742-754 the composition is skewed to acidic residues; that stretch reads DEEEEEEEEEEEV.

This sequence belongs to the protein kinase superfamily. Ser/Thr protein kinase family.

It is found in the membrane. The enzyme catalyses L-seryl-[protein] + ATP = O-phospho-L-seryl-[protein] + ADP + H(+). It carries out the reaction L-threonyl-[protein] + ATP = O-phospho-L-threonyl-[protein] + ADP + H(+). Its function is as follows. Serine/threonine-protein kinase that may function as a signaling receptor of extracellular matrix component. The polypeptide is Wall-associated receptor kinase-like 18 (WAKL18) (Arabidopsis thaliana (Mouse-ear cress)).